Here is a 343-residue protein sequence, read N- to C-terminus: Phenylalanine--tRNA ligase alpha subunit (343 aa).

A Mg(2+)-binding site is contributed by Glu264.

This sequence belongs to the class-II aminoacyl-tRNA synthetase family. Phe-tRNA synthetase alpha subunit type 1 subfamily. In terms of assembly, tetramer of two alpha and two beta subunits. Requires Mg(2+) as cofactor.

Its subcellular location is the cytoplasm. It carries out the reaction tRNA(Phe) + L-phenylalanine + ATP = L-phenylalanyl-tRNA(Phe) + AMP + diphosphate + H(+). This chain is Phenylalanine--tRNA ligase alpha subunit, found in Azoarcus sp. (strain BH72).